A 220-amino-acid polypeptide reads, in one-letter code: Ribose-5-phosphate isomerase A (220 aa).

Residues 25-28, 80-83, and 93-96 contribute to the substrate site; these read TGST, DGAD, and KGGG. Glu-102 acts as the Proton acceptor in catalysis. Lys-120 provides a ligand contact to substrate.

It belongs to the ribose 5-phosphate isomerase family. As to quaternary structure, homodimer.

It carries out the reaction aldehydo-D-ribose 5-phosphate = D-ribulose 5-phosphate. It functions in the pathway carbohydrate degradation; pentose phosphate pathway; D-ribose 5-phosphate from D-ribulose 5-phosphate (non-oxidative stage): step 1/1. Its function is as follows. Catalyzes the reversible conversion of ribose-5-phosphate to ribulose 5-phosphate. This is Ribose-5-phosphate isomerase A from Bacillus thuringiensis subsp. konkukian (strain 97-27).